The chain runs to 433 residues: ATP-dependent protease ATPase subunit HslU (433 aa).

Residues valine 18, 60–65 (GVGKTE), aspartate 246, glutamate 311, and arginine 383 each bind ATP.

Belongs to the ClpX chaperone family. HslU subfamily. In terms of assembly, a double ring-shaped homohexamer of HslV is capped on each side by a ring-shaped HslU homohexamer. The assembly of the HslU/HslV complex is dependent on binding of ATP.

It is found in the cytoplasm. ATPase subunit of a proteasome-like degradation complex; this subunit has chaperone activity. The binding of ATP and its subsequent hydrolysis by HslU are essential for unfolding of protein substrates subsequently hydrolyzed by HslV. HslU recognizes the N-terminal part of its protein substrates and unfolds these before they are guided to HslV for hydrolysis. In Rhodopseudomonas palustris (strain ATCC BAA-98 / CGA009), this protein is ATP-dependent protease ATPase subunit HslU.